The chain runs to 151 residues: Small ribosomal subunit protein uS11A (151 aa).

The segment at 131 to 151 is disordered; that stretch reads DVTPIPSDSTRRKGGRRGRRL. A compositionally biased stretch (basic residues) spans 142-151; it reads RKGGRRGRRL.

This sequence belongs to the universal ribosomal protein uS11 family.

This chain is Small ribosomal subunit protein uS11A, found in Drosophila melanogaster (Fruit fly).